We begin with the raw amino-acid sequence, 283 residues long: uncharacterized protein (283 aa).

The N-linked (GlcNAc...) asparagine glycan is linked to Asn15. Positions 15 to 81 (NATASTVFAI…QELNIALKVQ (67 aa)) constitute a PQ-loop 1 domain. 6 helical membrane-spanning segments follow: residues 19-39 (STVF…PQII), 48-68 (EGLD…LSVY), 108-128 (ALFV…MLIL), 138-158 (VEWP…IGFL), 170-190 (VTGI…FSFL), and 206-226 (GLLF…NVLL). The PQ-loop 2 domain maps to 149–204 (ATVLVNIGFLPQYISIFRARAVTGISYLFLAIDSSGSLFSFLSLPFDRWDVLAAVD). N-linked (GlcNAc...) asparagine glycosylation occurs at Asn228.

The protein resides in the membrane. This is an uncharacterized protein from Schizosaccharomyces pombe (strain 972 / ATCC 24843) (Fission yeast).